The sequence spans 434 residues: ATP-dependent protease ATPase subunit HslU (434 aa).

ATP is bound by residues Val-18, 60-65, Asp-247, Glu-312, and Arg-384; that span reads GVGKTE.

This sequence belongs to the ClpX chaperone family. HslU subfamily. In terms of assembly, a double ring-shaped homohexamer of HslV is capped on each side by a ring-shaped HslU homohexamer. The assembly of the HslU/HslV complex is dependent on binding of ATP.

It is found in the cytoplasm. Its function is as follows. ATPase subunit of a proteasome-like degradation complex; this subunit has chaperone activity. The binding of ATP and its subsequent hydrolysis by HslU are essential for unfolding of protein substrates subsequently hydrolyzed by HslV. HslU recognizes the N-terminal part of its protein substrates and unfolds these before they are guided to HslV for hydrolysis. In Bradyrhizobium sp. (strain BTAi1 / ATCC BAA-1182), this protein is ATP-dependent protease ATPase subunit HslU.